A 599-amino-acid polypeptide reads, in one-letter code: Dachshund homolog 2 (599 aa).

The interval 69-155 is DACHbox-N; sequence RMVDMHGMKV…LITRKDFETL (87 aa). 3 disordered regions span residues 166–186, 237–280, and 370–409; these read RQMT…PKRS, LQGN…GPQH, and RIPE…MDHH. Over residues 237–262 the composition is skewed to polar residues; the sequence is LQGNGSQNGTESEPDDLNSNTGGSES. Low complexity predominate over residues 389–405; the sequence is SQTSSHTSSSVSSSPSQ. Residues 453 to 533 are DACHbox-C; sequence SSVETLLTNI…KTKRKLQEAL (81 aa). Residues 459 to 554 adopt a coiled-coil conformation; the sequence is LTNIQGLLKV…QALKQATTSD (96 aa).

It belongs to the DACH/dachshund family. In terms of assembly, interacts with SIX6 and EYA2.

Its subcellular location is the nucleus. In terms of biological role, transcription factor that is involved in regulation of organogenesis. Seems to be a regulator for SIX1 and SIX6. Seems to act as a corepressor of SIX6 in regulating proliferation by directly repressing cyclin-dependent kinase inhibitors, including the p27Kip1 promoter. Is recruited with SIX6 to the p27Kip1 promoter in embryonal retina. SIX6 corepression also seems to involve NCOR1, TBL1, HDAC1 and HDAC3. May be involved together with PAX3, SIX1, and EYA2 in regulation of myogenesis. In the developing somite, expression of DACH2 and PAX3 is regulated by the overlying ectoderm, and DACH2 and PAX3 positively regulate each other's expression. Probably binds to DNA via its DACHbox-N domain. The chain is Dachshund homolog 2 (DACH2) from Homo sapiens (Human).